Reading from the N-terminus, the 129-residue chain is Small ribosomal subunit protein bS6 (129 aa).

Basic and acidic residues predominate over residues 110-121 (FVRRDDERREDT). Residues 110–129 (FVRRDDERREDTVEAASSEE) are disordered.

It belongs to the bacterial ribosomal protein bS6 family.

In terms of biological role, binds together with bS18 to 16S ribosomal RNA. The chain is Small ribosomal subunit protein bS6 from Aeromonas salmonicida (strain A449).